Reading from the N-terminus, the 101-residue chain is Small ribosomal subunit protein uS14A (101 aa).

The segment at 28 to 57 (KDIIRSPSSAPEQRSTAQRALARQPRDASP) is disordered. Over residues 33-45 (SPSSAPEQRSTAQ) the composition is skewed to polar residues.

It belongs to the universal ribosomal protein uS14 family. In terms of assembly, part of the 30S ribosomal subunit. Contacts proteins S3 and S10.

In terms of biological role, binds 16S rRNA, required for the assembly of 30S particles and may also be responsible for determining the conformation of the 16S rRNA at the A site. The sequence is that of Small ribosomal subunit protein uS14A from Mycobacterium bovis (strain ATCC BAA-935 / AF2122/97).